The chain runs to 235 residues: Pyridoxine 5'-phosphate synthase (235 aa).

Position 6 (Asn-6) interacts with 3-amino-2-oxopropyl phosphate. Asp-8–His-9 lines the 1-deoxy-D-xylulose 5-phosphate pocket. 3-amino-2-oxopropyl phosphate is bound at residue Arg-17. His-42 serves as the catalytic Proton acceptor. Positions 44 and 49 each coordinate 1-deoxy-D-xylulose 5-phosphate. Glu-69 acts as the Proton acceptor in catalysis. Thr-99 lines the 1-deoxy-D-xylulose 5-phosphate pocket. Residue His-189 is the Proton donor of the active site. 3-amino-2-oxopropyl phosphate-binding positions include Gly-190 and Gly-211–His-212.

Belongs to the PNP synthase family. As to quaternary structure, homooctamer; tetramer of dimers.

The protein localises to the cytoplasm. It catalyses the reaction 3-amino-2-oxopropyl phosphate + 1-deoxy-D-xylulose 5-phosphate = pyridoxine 5'-phosphate + phosphate + 2 H2O + H(+). It participates in cofactor biosynthesis; pyridoxine 5'-phosphate biosynthesis; pyridoxine 5'-phosphate from D-erythrose 4-phosphate: step 5/5. In terms of biological role, catalyzes the complicated ring closure reaction between the two acyclic compounds 1-deoxy-D-xylulose-5-phosphate (DXP) and 3-amino-2-oxopropyl phosphate (1-amino-acetone-3-phosphate or AAP) to form pyridoxine 5'-phosphate (PNP) and inorganic phosphate. This Chlorobium phaeovibrioides (strain DSM 265 / 1930) (Prosthecochloris vibrioformis (strain DSM 265)) protein is Pyridoxine 5'-phosphate synthase.